We begin with the raw amino-acid sequence, 219 residues long: Steroid receptor RNA activator 1 (219 aa).

Disordered regions lie at residues 1-90 (MAEL…SSPV) and 192-219 (SLSS…QPSS). Residues 23–32 (YGLQTQTGGT) show a composition bias toward polar residues. Ser48 carries the post-translational modification Phosphoserine. Over residues 55–76 (SGPPPVDHPPPSSKASRPPPMG) the composition is skewed to pro residues. Residues 192–203 (SLSSEENKEEKS) show a composition bias toward basic and acidic residues. Residues 206-219 (APENQTIPGFQPSS) are compositionally biased toward polar residues.

The protein belongs to the SRA1 family. As to quaternary structure, SRA1 RNA exists in a ribonucleoprotein complex containing NCOA1. The RNA also forms a complex with PUS1 and RARG in the nucleus. Interacts with AR. In terms of tissue distribution, expressed in various prostate cancer cell lines.

The protein resides in the nucleus. The protein localises to the cytoplasm. Functional RNA which acts as a transcriptional coactivator that selectively enhances steroid receptor-mediated transactivation ligand-independently through a mechanism involving the modulating N-terminal domain (AF-1) of steroid receptors. Also mediates transcriptional coactivation of steroid receptors ligand-dependently through the steroid-binding domain (AF-2). Enhances cellular proliferation and differentiation and promotes apoptosis in vivo. May play a role in tumorigenesis. The sequence is that of Steroid receptor RNA activator 1 from Rattus norvegicus (Rat).